A 653-amino-acid polypeptide reads, in one-letter code: Protein fem-1 homolog A (653 aa).

ANK repeat units lie at residues 2–31 (DLHT…REEL), 40–70 (SGGT…SVEA), 82–111 (EGAP…SVNR), 115–145 (TNST…DLEV), 149–178 (HGHT…QVNR), 182–211 (KGNT…RMER), and 214–243 (YGMT…AGDE). Phosphoserine is present on Ser-108. Residues 242–274 (DEQAQPGLARVQPQGARSSPEEPPSGESYESCC) are disordered. TPR repeat units lie at residues 282 to 316 (VEAL…RHQG) and 374 to 407 (SYYI…QQNN). ANK repeat units lie at residues 518 to 560 (NGFT…DPDS) and 564 to 593 (DNNT…HMDA).

It belongs to the fem-1 family. Component of a CRL2 E3 ubiquitin-protein ligase complex, also named ECS (Elongin BC-CUL2/5-SOCS-box protein) complex, composed of CUL2, Elongin BC (ELOB and ELOC), RBX1 and substrate-specific adapter FEM1A. Interacts with PTGER4. Interacts with NFKB1; the interaction is direct. Phosphorylated; highly phosphorylated in myoblasts and myotubes. Phosphorylation at Ser-108 promotes PGE2-EP4-mediated inhibition of inflammation. Dephosphorylated by protein phosphatase 2A (PP2A).

Its subcellular location is the mitochondrion. It is found in the cytoplasm. Its pathway is protein modification; protein ubiquitination. Its function is as follows. Substrate-recognition component of a Cul2-RING (CRL2) E3 ubiquitin-protein ligase complex of the DesCEND (destruction via C-end degrons) pathway, which recognizes a C-degron located at the extreme C terminus of target proteins, leading to their ubiquitination and degradation. The C-degron recognized by the DesCEND pathway is usually a motif of less than ten residues and can be present in full-length proteins, truncated proteins or proteolytically cleaved forms. The CRL2(FEM1A) complex specifically recognizes proteins with an arginine at the C-terminus: recognizes and binds proteins ending with -Lys/Arg-Xaa-Arg and -Lys/Arg-Xaa-Xaa-Arg C-degrons, such as SIL1 or OR51B2, leading to their ubiquitination and degradation. Involved in PGE2-EP4-mediated inhibition of inflammation of macrophages via interaction with NFKB1 and PTGER4. Promotes inflammation in brain microglia through MAP2K4/MKK4-mediated signaling. The sequence is that of Protein fem-1 homolog A from Bos taurus (Bovine).